Consider the following 234-residue polypeptide: dTDP-4-amino-4,6-dideoxyglucose formyltransferase (234 aa).

DTDP-4-amino-4,6-dideoxy-alpha-D-glucose-binding positions include Asn-9 and His-62–Lys-64. Gln-65 to Phe-67 contributes to the (6R)-10-formyltetrahydrofolate binding site. His-81 serves as the catalytic Proton acceptor. Gly-90–Gln-94 is a dTDP-4-amino-4,6-dideoxy-alpha-D-glucose binding site. (6R)-10-formyltetrahydrofolate is bound by residues Asp-112, Asp-116, and Lys-175. Position 209 (Asn-209) interacts with dTDP-4-amino-4,6-dideoxy-alpha-D-glucose.

This sequence belongs to the dTDP-Qui4N formyltransferase family. As to quaternary structure, homodimer.

The catalysed reaction is dTDP-4-amino-4,6-dideoxy-alpha-D-glucose + (6R)-10-formyltetrahydrofolate = dTDP-4-formamido-4,6-dideoxy-alpha-D-glucose + (6S)-5,6,7,8-tetrahydrofolate + H(+). Its function is as follows. Sugar N-formyltransferase that catalyzes the conversion of dTDP-4-amino-4,6-dideoxyglucose into dTDP-4-formamido-4,6-dideoxyglucose using N(10)-formyltetrahydrofolate as the carbon source. Plays a role in virulence. The protein is dTDP-4-amino-4,6-dideoxyglucose formyltransferase of Mycobacterium bovis (strain ATCC BAA-935 / AF2122/97).